The following is an 81-amino-acid chain: Putative membrane protein insertion efficiency factor (81 aa).

The protein belongs to the UPF0161 family.

It localises to the cell inner membrane. In terms of biological role, could be involved in insertion of integral membrane proteins into the membrane. The sequence is that of Putative membrane protein insertion efficiency factor from Legionella pneumophila subsp. pneumophila (strain Philadelphia 1 / ATCC 33152 / DSM 7513).